The sequence spans 61 residues: Large ribosomal subunit protein uL30 (61 aa).

The protein belongs to the universal ribosomal protein uL30 family. Part of the 50S ribosomal subunit.

The chain is Large ribosomal subunit protein uL30 from Corynebacterium jeikeium (strain K411).